Consider the following 357-residue polypeptide: Spermatogenesis- and oogenesis-specific basic helix-loop-helix-containing protein 1 (357 aa).

Positions 1–14 (MASGGHERANEDYR) are enriched in basic and acidic residues. The segment at 1–40 (MASGGHERANEDYRVSGITGCSKTPQPETQDSLQTSSQSS) is disordered. The segment covering 19–31 (TGCSKTPQPETQD) has biased composition (polar residues). The bHLH domain maps to 54–105 (PSLRRNVVSERERRRRISLSCEHLRALLPQFDGRREDMASVLEMSVYFLQLA). The disordered stretch occupies residues 145-210 (KPDSGIAKPS…EPESSSLGPG (66 aa)). A compositionally biased stretch (low complexity) spans 200–209 (SEPESSSLGP).

In terms of assembly, forms both hetero- and homodimers with SOHLH2. In terms of tissue distribution, in males, it is mainly expressed in testis, while in females it is mainly expressed in ovary. In testis, it is exclusively expressed in spermatogonia, with a preference for prespermatogonia and type A spermatogonia. In ovary, it is detected in germ cell cysts, primordial follicles, and primary follicles but is undetectable by the secondary follicle stage (at protein level). Expressed in the majority of spermatogonia in adult animals, but not in the most undifferentiated spermatogonial population.

The protein localises to the cytoplasm. The protein resides in the nucleus. Transcription regulator of both male and female germline differentiation. Suppresses genes involved in spermatogonial stem cells maintenance, and induces genes important for spermatogonial differentiation. Coordinates oocyte differentiation without affecting meiosis I. This Mus musculus (Mouse) protein is Spermatogenesis- and oogenesis-specific basic helix-loop-helix-containing protein 1 (Sohlh1).